A 403-amino-acid chain; its full sequence is S-adenosylmethionine synthase (403 aa).

Histidine 17 is a binding site for ATP. Aspartate 19 contacts Mg(2+). Glutamate 45 contributes to the K(+) binding site. Glutamate 58 and glutamine 104 together coordinate L-methionine. Residues 104–114 (QSPDIAQGVDT) are flexible loop. Residues 179–181 (DGK), 250–251 (KF), aspartate 259, 265–266 (RK), alanine 282, and lysine 286 each bind ATP. Residue aspartate 259 participates in L-methionine binding. An L-methionine-binding site is contributed by lysine 290.

This sequence belongs to the AdoMet synthase family. As to quaternary structure, homotetramer; dimer of dimers. Requires Mg(2+) as cofactor. The cofactor is K(+).

The protein localises to the cytoplasm. It carries out the reaction L-methionine + ATP + H2O = S-adenosyl-L-methionine + phosphate + diphosphate. Its pathway is amino-acid biosynthesis; S-adenosyl-L-methionine biosynthesis; S-adenosyl-L-methionine from L-methionine: step 1/1. Its function is as follows. Catalyzes the formation of S-adenosylmethionine (AdoMet) from methionine and ATP. The overall synthetic reaction is composed of two sequential steps, AdoMet formation and the subsequent tripolyphosphate hydrolysis which occurs prior to release of AdoMet from the enzyme. The sequence is that of S-adenosylmethionine synthase from Mycobacterium ulcerans (strain Agy99).